The sequence spans 316 residues: Thymidylate synthase (316 aa).

DUMP is bound by residues Arg-23 and 178–179 (RR). The active-site Nucleophile is Cys-198. DUMP is bound by residues 218–221 (RSGD), Asn-229, and 259–261 (HIY). Residue Asp-221 coordinates (6R)-5,10-methylene-5,6,7,8-tetrahydrofolate. Residue Ala-315 participates in (6R)-5,10-methylene-5,6,7,8-tetrahydrofolate binding.

Belongs to the thymidylate synthase family. Bacterial-type ThyA subfamily. In terms of assembly, homodimer.

Its subcellular location is the cytoplasm. It carries out the reaction dUMP + (6R)-5,10-methylene-5,6,7,8-tetrahydrofolate = 7,8-dihydrofolate + dTMP. It functions in the pathway pyrimidine metabolism; dTTP biosynthesis. In terms of biological role, catalyzes the reductive methylation of 2'-deoxyuridine-5'-monophosphate (dUMP) to 2'-deoxythymidine-5'-monophosphate (dTMP) while utilizing 5,10-methylenetetrahydrofolate (mTHF) as the methyl donor and reductant in the reaction, yielding dihydrofolate (DHF) as a by-product. This enzymatic reaction provides an intracellular de novo source of dTMP, an essential precursor for DNA biosynthesis. The chain is Thymidylate synthase from Pediococcus pentosaceus (strain ATCC 25745 / CCUG 21536 / LMG 10740 / 183-1w).